The following is an 841-amino-acid chain: Axin-1 (841 aa).

Positions 1-78 (MNIQGKGFPL…GYEPEGSASP (78 aa)) are disordered. Over residues 44-61 (FYSSKSDAVRNETSTATP) the composition is skewed to polar residues. The RGS domain maps to 88-211 (SLHSLLDDQD…LKSDIYLEYT (124 aa)). Residues 217–269 (SPKIYSDPSSGSGTGKGLPGYLPTLNEDEEWKCDQDTEPEASRDSAPSSRLTQ) form a disordered region. Basic and acidic residues predominate over residues 248–259 (KCDQDTEPEASR). The tract at residues 348–433 (LRKQHRREMQ…DADISSGPSV (86 aa)) is interaction with GSK3B. The tract at residues 434–508 (ISHKMPSAQP…RSPESGHLGK (75 aa)) is interaction with beta-catenin. Disordered regions lie at residues 482–527 (KTPG…TTKS), 613–635 (NIKKTDSGKSDGANYEMPGSPED), and 727–756 (RRLEEEEKRAGKLPLKQRLKPQKRPGSGAS). Residues 727–736 (RRLEEEEKRA) show a composition bias toward basic and acidic residues. Residues 759–841 (CENIVVAYYF…KIIGKVEKID (83 aa)) form the DIX domain.

In terms of assembly, homodimer. In terms of processing, ADP-ribosylated by tankyrase TNKS and TNKS2. Poly-ADP-ribosylated protein is recognized by RNF146, followed by ubiquitination at 'Lys-48' and subsequent activation of the Wnt signaling pathway. Ubiquitinated by RNF146 when poly-ADP-ribosylated, leading to its degradation and subsequent activation of the Wnt signaling pathway.

Its subcellular location is the cytoplasm. The protein localises to the nucleus. It localises to the membrane. It is found in the cell membrane. Component of the beta-catenin destruction complex required for regulating CTNNB1 levels through phosphorylation and ubiquitination, and modulating Wnt-signaling. Controls dorsoventral patterning via two opposing effects; down-regulates CTNNB1 to inhibit the Wnt signaling pathway and ventralize embryos, but also dorsalizes embryos by activating a Wnt-independent JNK signaling pathway. This Gallus gallus (Chicken) protein is Axin-1 (AXIN1).